A 563-amino-acid chain; its full sequence is Lipoprotein LpqB (563 aa).

The first 19 residues, M1–G19, serve as a signal peptide directing secretion. Residue C20 is the site of N-palmitoyl cysteine attachment. A lipid anchor (S-diacylglycerol cysteine) is attached at C20.

This sequence belongs to the LpqB lipoprotein family.

It is found in the cell membrane. This Corynebacterium efficiens (strain DSM 44549 / YS-314 / AJ 12310 / JCM 11189 / NBRC 100395) protein is Lipoprotein LpqB.